Reading from the N-terminus, the 95-residue chain is Large ribosomal subunit protein uL23c (95 aa).

It belongs to the universal ribosomal protein uL23 family. As to quaternary structure, part of the 50S ribosomal subunit.

The protein localises to the plastid. It is found in the chloroplast. In terms of biological role, binds to 23S rRNA. The protein is Large ribosomal subunit protein uL23c (rpl23) of Guillardia theta (Cryptophyte).